A 690-amino-acid chain; its full sequence is Elongation factor G (690 aa).

Positions 8-283 (EDYRNFGIMA…AVVDYLPSPL (276 aa)) constitute a tr-type G domain. Residues 17–24 (AHIDAGKT), 81–85 (DTPGH), and 135–138 (NKMD) each bind GTP.

Belongs to the TRAFAC class translation factor GTPase superfamily. Classic translation factor GTPase family. EF-G/EF-2 subfamily.

Its subcellular location is the cytoplasm. Its function is as follows. Catalyzes the GTP-dependent ribosomal translocation step during translation elongation. During this step, the ribosome changes from the pre-translocational (PRE) to the post-translocational (POST) state as the newly formed A-site-bound peptidyl-tRNA and P-site-bound deacylated tRNA move to the P and E sites, respectively. Catalyzes the coordinated movement of the two tRNA molecules, the mRNA and conformational changes in the ribosome. This chain is Elongation factor G, found in Bradyrhizobium sp. (strain BTAi1 / ATCC BAA-1182).